Here is a 384-residue protein sequence, read N- to C-terminus: Probable L-tyrosine/L-aspartate decarboxylase (384 aa).

At Lys-233 the chain carries N6-(pyridoxal phosphate)lysine.

The protein belongs to the group II decarboxylase family. MfnA subfamily. Requires pyridoxal 5'-phosphate as cofactor.

It catalyses the reaction L-tyrosine + H(+) = tyramine + CO2. The catalysed reaction is L-aspartate + H(+) = beta-alanine + CO2. It functions in the pathway cofactor biosynthesis; methanofuran biosynthesis. Its pathway is cofactor biosynthesis; coenzyme A biosynthesis. Its function is as follows. Catalyzes the decarboxylation of L-tyrosine to produce tyramine for methanofuran biosynthesis. Can also catalyze the decarboxylation of L-aspartate to produce beta-alanine for coenzyme A (CoA) biosynthesis. In Methanococcus maripaludis (strain DSM 14266 / JCM 13030 / NBRC 101832 / S2 / LL), this protein is Probable L-tyrosine/L-aspartate decarboxylase.